Here is a 149-residue protein sequence, read N- to C-terminus: Putative inactive group IIC secretory phospholipase A2 (149 aa).

The first 18 residues, 1-18, serve as a signal peptide directing secretion; that stretch reads MKVIAILTLLLFCSPTHS. Disulfide bonds link Cys44–Cys142, Cys77–Cys107, Cys95–Cys112, and Cys97–Cys105. Ca(2+) contacts are provided by Tyr45, Gly47, and Gly49.

It belongs to the phospholipase A2 family. Requires Ca(2+) as cofactor.

It is found in the secreted. In terms of biological role, inactive phospholipase. This chain is Putative inactive group IIC secretory phospholipase A2 (PLA2G2C), found in Homo sapiens (Human).